The chain runs to 79 residues: Ponericin-W-like 32.1 (79 aa).

Positions 1 to 23 are cleaved as a signal peptide; sequence MKCKKQLLVIFFAYFLVVNESEA. The propeptide occupies 49–79; it reads RALMKRDLEDIMDPYQKNLKLDRYLRRLAMD.

This sequence belongs to the non-disulfide-bridged peptide (NDBP) superfamily. Medium-length antimicrobial peptide (group 3) family. Ponericin-W subfamily. Expressed by the venom gland.

It localises to the secreted. The protein localises to the target cell membrane. In terms of biological role, antimicrobial peptide with potent activity against a range of Gram-positive and Gram-negative bacteria. Has high hemolytic activity against erythrocytes. May act by disrupting the integrity of the bacterial cell membrane. The sequence is that of Ponericin-W-like 32.1 from Lychas mucronatus (Chinese swimming scorpion).